A 343-amino-acid chain; its full sequence is Uroporphyrinogen decarboxylase (343 aa).

Residues 21–25, Asp-71, Tyr-148, Ser-203, and His-316 each bind substrate; that span reads RQAGR.

Belongs to the uroporphyrinogen decarboxylase family. In terms of assembly, homodimer.

The protein localises to the cytoplasm. It carries out the reaction uroporphyrinogen III + 4 H(+) = coproporphyrinogen III + 4 CO2. Its pathway is porphyrin-containing compound metabolism; protoporphyrin-IX biosynthesis; coproporphyrinogen-III from 5-aminolevulinate: step 4/4. In terms of biological role, catalyzes the decarboxylation of four acetate groups of uroporphyrinogen-III to yield coproporphyrinogen-III. The chain is Uroporphyrinogen decarboxylase from Campylobacter fetus subsp. fetus (strain 82-40).